The primary structure comprises 541 residues: Chaperonin GroEL (541 aa).

ATP is bound by residues 29 to 32 (TLGP), 86 to 90 (DGTTT), Gly413, and Asp495.

As to quaternary structure, forms a cylinder of 14 subunits composed of two heptameric rings stacked back-to-back. Interacts with the co-chaperonin GroES.

The protein resides in the cytoplasm. It carries out the reaction ATP + H2O + a folded polypeptide = ADP + phosphate + an unfolded polypeptide.. In terms of biological role, together with its co-chaperonin GroES, plays an essential role in assisting protein folding. The GroEL-GroES system forms a nano-cage that allows encapsulation of the non-native substrate proteins and provides a physical environment optimized to promote and accelerate protein folding. This is Chaperonin GroEL from Thermoanaerobacter brockii (Thermoanaerobium brockii).